Reading from the N-terminus, the 181-residue chain is Extracellular superoxide dismutase [Cu-Zn] (181 aa).

The signal sequence occupies residues 1-18; sequence MMQYLVVSLALCATICSA. The N-linked (GlcNAc...) asparagine glycan is linked to N46. Cu cation contacts are provided by H75, H77, and H92. A disulfide bond links C86 and C175. The Zn(2+) site is built by H92, H100, H109, and D112. Residue N119 is glycosylated (N-linked (GlcNAc...) asparagine). H149 is a binding site for Cu cation. N159 is a glycosylation site (N-linked (GlcNAc...) asparagine).

It belongs to the Cu-Zn superoxide dismutase family. The cofactor is Cu cation. Zn(2+) serves as cofactor. As to expression, expressed at higher levels in females compared to males.

It is found in the secreted. It carries out the reaction 2 superoxide + 2 H(+) = H2O2 + O2. Its function is as follows. Protects the extracellular space from the toxic effects of reactive oxygen intermediates by converting superoxide radicals into hydrogen peroxide and oxygen. This Drosophila melanogaster (Fruit fly) protein is Extracellular superoxide dismutase [Cu-Zn].